Here is a 601-residue protein sequence, read N- to C-terminus: Deuterosome assembly protein 1 (601 aa).

Coiled-coil stretches lie at residues Cys14–Thr59, Thr86–Gln196, and Ile226–Ser277. The segment at Ala305–Glu329 is disordered. Residues Glu354–Lys397 adopt a coiled-coil conformation. At Ser544 the chain carries Phosphoserine. Residues Ala555–Glu586 adopt a coiled-coil conformation.

This sequence belongs to the CEP63 family. In terms of assembly, interacts with CEP152; the interaction is mutually exclusive with CEP63. As to expression, highly enriched in multicilia-abundant tissues (trachea and oviduct).

The protein localises to the cytoplasm. Functionally, key structural component of the deuterosome, a structure that promotes de novo centriole amplification in multiciliated cells. Deuterosome-mediated centriole amplification occurs in terminally differentiated multiciliated cells and can generate more than 100 centrioles. Probably sufficient for the specification and formation of the deuterosome inner core. Interacts with CEP152 and recruits PLK4 to activate centriole biogenesis. The polypeptide is Deuterosome assembly protein 1 (Mus musculus (Mouse)).